A 613-amino-acid polypeptide reads, in one-letter code: Kelch-like protein 36 (613 aa).

The 68-residue stretch at 45–112 (CDVVLVVEEQ…LYSSELELDG (68 aa)) folds into the BTB domain. In terms of domain architecture, BACK spans 147–249 (YLYLQELASI…PEDILLQRVK (103 aa)). Kelch repeat units lie at residues 294-343 (CLLF…VLGG), 344-395 (FIFV…SIED), 396-442 (MLVA…IYKD), 444-491 (VYIS…SLGD), 492-544 (SIYS…VWQG), and 545-593 (RIYI…VCAL).

As to quaternary structure, interacts with CUL3.

The protein operates within protein modification; protein ubiquitination. Functionally, probable substrate-specific adapter of an E3 ubiquitin-protein ligase complex which mediates the ubiquitination and subsequent proteasomal degradation of target proteins. The protein is Kelch-like protein 36 (Klhl36) of Rattus norvegicus (Rat).